The chain runs to 568 residues: 2-isopropylmalate synthase (568 aa).

The Pyruvate carboxyltransferase domain occupies 37–313 (PRWLSTDLRD…DPMIDFSNID (277 aa)). Mg(2+)-binding residues include Asp46, His252, His254, and Asn288. The tract at residues 455–568 (EGVVGVMAYR…CSAVNRAQQS (114 aa)) is regulatory domain.

This sequence belongs to the alpha-IPM synthase/homocitrate synthase family. LeuA type 2 subfamily. As to quaternary structure, homodimer. Mg(2+) serves as cofactor.

The protein resides in the cytoplasm. It catalyses the reaction 3-methyl-2-oxobutanoate + acetyl-CoA + H2O = (2S)-2-isopropylmalate + CoA + H(+). It participates in amino-acid biosynthesis; L-leucine biosynthesis; L-leucine from 3-methyl-2-oxobutanoate: step 1/4. Functionally, catalyzes the condensation of the acetyl group of acetyl-CoA with 3-methyl-2-oxobutanoate (2-ketoisovalerate) to form 3-carboxy-3-hydroxy-4-methylpentanoate (2-isopropylmalate). This chain is 2-isopropylmalate synthase, found in Thermobifida fusca (strain YX).